The primary structure comprises 165 residues: V-type proton ATPase 16 kDa proteolipid subunit (165 aa).

Topologically, residues 1–10 are lumenal; sequence MPSTFSGDET. Residues 11 to 33 form a helical membrane-spanning segment; it reads APFFGFLGAAAALVFSCMGAAYG. Residues 34-55 are Cytoplasmic-facing; it reads TAKSGVGVASMGVMRPELVMKS. A helical membrane pass occupies residues 56–76; the sequence is IVPVVMAGVLGIYGLIIAVII. Topologically, residues 77–95 are lumenal; sequence STGINPKTKSYYLFDGYAH. A helical membrane pass occupies residues 96–117; that stretch reads LSSGLACGLAGLSAGMAIGIVG. Over 118 to 129 the chain is Cytoplasmic; sequence DAGVRANAQQPK. Residues 130–155 traverse the membrane as a helical segment; it reads LFVGMILILIFAEALALYGLIVGIIL. The Lumenal segment spans residues 156 to 165; that stretch reads SSRAGQSRAE.

This sequence belongs to the V-ATPase proteolipid subunit family. In terms of assembly, V-ATPase is a heteromultimeric enzyme composed of a peripheral catalytic V1 complex (main components: subunits A, B, C, D, E, and F) attached to an integral membrane V0 proton pore complex (main component: the proteolipid protein; which is present as a hexamer that forms the proton-conducting pore).

It localises to the vacuole membrane. Functionally, proton-conducting pore forming subunit of the membrane integral V0 complex of vacuolar ATPase. V-ATPase is responsible for acidifying a variety of intracellular compartments in eukaryotic cells. The polypeptide is V-type proton ATPase 16 kDa proteolipid subunit (Nicotiana tabacum (Common tobacco)).